Reading from the N-terminus, the 77-residue chain is Conotoxin CaHr91 (77 aa).

A signal peptide spans 1–19 (MKLTCALIITVLFLSITAD). The propeptide occupies 20-43 (DSRGKQGYRALKSIAGMLNSKTVR). 3 disulfides stabilise this stretch: C45–C60, C52–C65, and C59–C74.

Belongs to the conotoxin O1 superfamily. As to expression, expressed by the venom duct.

Its subcellular location is the secreted. This chain is Conotoxin CaHr91, found in Conus capitaneus (Captain cone).